A 596-amino-acid polypeptide reads, in one-letter code: NADH-quinone oxidoreductase subunit C/D (596 aa).

Residues 1–186 (MTDLTAQDAA…DPFELTKAKQ (186 aa)) are NADH dehydrogenase I subunit C. Positions 210–596 (DFMFLNLGPN…IDFVMSDVDR (387 aa)) are NADH dehydrogenase I subunit D.

The protein in the N-terminal section; belongs to the complex I 30 kDa subunit family. In the C-terminal section; belongs to the complex I 49 kDa subunit family. In terms of assembly, NDH-1 is composed of 13 different subunits. Subunits NuoB, CD, E, F, and G constitute the peripheral sector of the complex.

It localises to the cell inner membrane. The enzyme catalyses a quinone + NADH + 5 H(+)(in) = a quinol + NAD(+) + 4 H(+)(out). NDH-1 shuttles electrons from NADH, via FMN and iron-sulfur (Fe-S) centers, to quinones in the respiratory chain. The immediate electron acceptor for the enzyme in this species is believed to be ubiquinone. Couples the redox reaction to proton translocation (for every two electrons transferred, four hydrogen ions are translocated across the cytoplasmic membrane), and thus conserves the redox energy in a proton gradient. The protein is NADH-quinone oxidoreductase subunit C/D of Salmonella choleraesuis (strain SC-B67).